The sequence spans 89 residues: Small ribosomal subunit protein uS15 (89 aa).

It belongs to the universal ribosomal protein uS15 family. As to quaternary structure, part of the 30S ribosomal subunit. Forms a bridge to the 50S subunit in the 70S ribosome, contacting the 23S rRNA.

One of the primary rRNA binding proteins, it binds directly to 16S rRNA where it helps nucleate assembly of the platform of the 30S subunit by binding and bridging several RNA helices of the 16S rRNA. In terms of biological role, forms an intersubunit bridge (bridge B4) with the 23S rRNA of the 50S subunit in the ribosome. This is Small ribosomal subunit protein uS15 from Orientia tsutsugamushi (strain Boryong) (Rickettsia tsutsugamushi).